The primary structure comprises 331 residues: MKIRCDVCDKEEASVFCTADEASLCGGCDHQVHHANKLASKHLRFSLLYPSSSNTSSPLCDICQDKKALLFCQQDRAILCKDCDSSIHAANEHTKKHDRFLLTGVKLSATSSVYKPTSKSSSSSSSNQDFSVPGSSISNPPPLKKPLSAPPQSNKIQPFSKINGGDASVNQWGSTSTISEYLMDTLPGWHVEDFLDSSLPTYGFSKSGDDDGVLPYMEPEDDNNTKRNNNNNNNNNNNTVSLPSKNLGIWVPQIPQTLPSSYPNQYFSQDNNIQFGMYNKETSPEVVSFAPIQNMKQQGQNNKRWYDDGGFTVPQITPPPLSSNKKFRSFW.

Positions 5, 8, 28, 34, 60, 63, 83, and 93 each coordinate Zn(2+). The B box-type 1; atypical zinc finger occupies 5–47; the sequence is CDVCDKEEASVFCTADEASLCGGCDHQVHHANKLASKHLRFSL. A B box-type 2; atypical zinc finger spans residues 60 to 102; the sequence is CDICQDKKALLFCQQDRAILCKDCDSSIHAANEHTKKHDRFLL. Low complexity-rich tracts occupy residues 115-126 and 228-238; these read KPTSKSSSSSSS and NNNNNNNNNNN. Disordered regions lie at residues 115 to 167 and 209 to 241; these read KPTS…GGDA and DDDG…NTVS.

Interacts with COP1, HY5 and BBX32. Interacts with FLZ1.

Its subcellular location is the nucleus. Transcription activator that acts as a positive regulator of seedling photomorphogenesis. Acts downstream of COP1 and play an important role in early and long-term adjustment of the shade avoidance syndrome (SAS) responses in natural environments. In Arabidopsis thaliana (Mouse-ear cress), this protein is B-box zinc finger protein 21.